The following is a 362-amino-acid chain: Adenosine deaminase (362 aa).

2 residues coordinate Zn(2+): histidine 19 and histidine 21. Substrate contacts are provided by histidine 21, aspartate 23, and glycine 181. Histidine 208 contributes to the Zn(2+) binding site. The active-site Proton donor is the glutamate 211. Position 300 (aspartate 300) interacts with Zn(2+).

It belongs to the metallo-dependent hydrolases superfamily. Adenosine and AMP deaminases family. Adenosine deaminase subfamily. It depends on Zn(2+) as a cofactor.

The catalysed reaction is adenosine + H2O + H(+) = inosine + NH4(+). It catalyses the reaction 2'-deoxyadenosine + H2O + H(+) = 2'-deoxyinosine + NH4(+). In terms of biological role, catalyzes the hydrolytic deamination of adenosine and 2-deoxyadenosine. The chain is Adenosine deaminase from Mycobacterium sp. (strain JLS).